An 83-amino-acid polypeptide reads, in one-letter code: MSSMEGSVLKYPEPTEGSIGASSAKTSWPEVVGMSAEKAKEIILRDKPNAQVEVIPVDAMVHLNFDPNRVFVLVAVARTPTVG.

Residues 1–24 (MSSMEGSVLKYPEPTEGSIGASSA) form a disordered region.

Belongs to the protease inhibitor I13 (potato type I serine protease inhibitor) family.

In terms of biological role, inhibits both subtilisin and chymotrypsin. The protein is Subtilisin-chymotrypsin inhibitor CI-1A of Hordeum vulgare (Barley).